A 400-amino-acid polypeptide reads, in one-letter code: Queuine tRNA-ribosyltransferase catalytic subunit (400 aa).

Asp89 acts as the Proton acceptor in catalysis. Residues 89–93, Asp143, Gln185, and Gly212 each bind substrate; that span reads DSGGF. The interval 243–249 is RNA binding; it reads GVGFPVD. The active-site Nucleophile is the Asp262. The segment at 267 to 271 is RNA binding; important for wobble base 34 recognition; sequence TRTAR. Residues Cys301, Cys303, Cys306, and His331 each coordinate Zn(2+).

The protein belongs to the queuine tRNA-ribosyltransferase family. As to quaternary structure, heterodimer of a catalytic subunit and an accessory subunit. Zn(2+) serves as cofactor.

The protein resides in the cytoplasm. The catalysed reaction is guanosine(34) in tRNA + queuine = queuosine(34) in tRNA + guanine. In terms of biological role, catalytic subunit of the queuine tRNA-ribosyltransferase (TGT) that catalyzes the base-exchange of a guanine (G) residue with queuine (Q) at position 34 (anticodon wobble position) in tRNAs with GU(N) anticodons (tRNA-Asp, -Asn, -His and -Tyr), resulting in the hypermodified nucleoside queuosine (7-(((4,5-cis-dihydroxy-2-cyclopenten-1-yl)amino)methyl)-7-deazaguanosine). Catalysis occurs through a double-displacement mechanism. The nucleophile active site attacks the C1' of nucleotide 34 to detach the guanine base from the RNA, forming a covalent enzyme-RNA intermediate. The proton acceptor active site deprotonates the incoming queuine, allowing a nucleophilic attack on the C1' of the ribose to form the product. The chain is Queuine tRNA-ribosyltransferase catalytic subunit from Caenorhabditis briggsae.